A 359-amino-acid polypeptide reads, in one-letter code: UPF0496 protein At3g57100 (359 aa).

Residues 179–208 (HEELAKMVVKLEKTMKDIDKKLRRVRGRRA) are a coiled coil. Residues 214 to 234 (LLAPVIAVIFLSKLVAGLVPI) form a helical membrane-spanning segment.

Belongs to the UPF0496 family.

Its subcellular location is the membrane. In Arabidopsis thaliana (Mouse-ear cress), this protein is UPF0496 protein At3g57100.